The following is a 428-amino-acid chain: MSSEVIKRENVEVTLKVVVEAAKFEEAINKAYNKMKSRFNIQGFRKGKAPRKIVEKFYGVEVFYEEAFNIVFPEVYEAALDEHNIDPVDHPKVDLEDIVAGQDVVFTAVVEVMPEFEVADYVGIEVEKKEYNVQEEDIQRELDGLAEKNSRMITVEDRAVKEGDMVIIDYKGMVDGIAFEGGTAERQSLTIGSGQFIPGFEEQLVGKNIGEEVEVQVTFPEEYHAEELAGKAAIFEVKIHEIKEKEVPVIDDEFAKDVSEFDTLEELTNDIKKNLEEDAKNRAIQEQRNDVIEAIANKVELEIPSAVVNRQIDNMLADFDYRLQFQGLNLEYYLQLTGTKEEDLREQMRPDAVKTVKNELILEKIGAKENIVATDEELEEQLEKMAKQYNQEIEKLKTNLRQQDLNAIKEGIIIRKTVDFLAENAKLI.

The PPIase FKBP-type domain maps to 163–248 (GDMVIIDYKG…IHEIKEKEVP (86 aa)).

This sequence belongs to the FKBP-type PPIase family. Tig subfamily.

The protein resides in the cytoplasm. The catalysed reaction is [protein]-peptidylproline (omega=180) = [protein]-peptidylproline (omega=0). Involved in protein export. Acts as a chaperone by maintaining the newly synthesized protein in an open conformation. Functions as a peptidyl-prolyl cis-trans isomerase. This chain is Trigger factor, found in Alkaliphilus oremlandii (strain OhILAs) (Clostridium oremlandii (strain OhILAs)).